Here is a 270-residue protein sequence, read N- to C-terminus: Small ribosomal subunit protein eS1 (270 aa).

Positions 235–270 (GTSKGGAASTAAVAKGEEGVKVDRPEGYEPPVLETV) are disordered. The span at 239 to 248 (GGAASTAAVA) shows a compositional bias: low complexity. The segment covering 249 to 261 (KGEEGVKVDRPEG) has biased composition (basic and acidic residues).

The protein belongs to the eukaryotic ribosomal protein eS1 family. Component of the small ribosomal subunit. Mature ribosomes consist of a small (40S) and a large (60S) subunit. The 40S subunit contains about 33 different proteins and 1 molecule of RNA (18S). The 60S subunit contains about 49 different proteins and 3 molecules of RNA (28S, 5.8S and 5S).

It is found in the cytoplasm. In Ixodes scapularis (Black-legged tick), this protein is Small ribosomal subunit protein eS1.